A 208-amino-acid chain; its full sequence is Methylthioribulose-1-phosphate dehydratase (208 aa).

Zn(2+)-binding residues include His98 and His100.

This sequence belongs to the aldolase class II family. MtnB subfamily. It depends on Zn(2+) as a cofactor.

The catalysed reaction is 5-(methylsulfanyl)-D-ribulose 1-phosphate = 5-methylsulfanyl-2,3-dioxopentyl phosphate + H2O. The protein operates within amino-acid biosynthesis; L-methionine biosynthesis via salvage pathway; L-methionine from S-methyl-5-thio-alpha-D-ribose 1-phosphate: step 2/6. Catalyzes the dehydration of methylthioribulose-1-phosphate (MTRu-1-P) into 2,3-diketo-5-methylthiopentyl-1-phosphate (DK-MTP-1-P). This Hahella chejuensis (strain KCTC 2396) protein is Methylthioribulose-1-phosphate dehydratase.